The chain runs to 547 residues: Probable bifunctional tRNA threonylcarbamoyladenosine biosynthesis protein (547 aa).

The tract at residues 1 to 329 (MKNTFILGIE…FRTDDVNVTW (329 aa)) is kae1. Positions 113, 117, and 134 each coordinate Fe cation. Residues 134-138 (YVSGA), Asp-166, Gly-179, Glu-183, and Asn-262 each bind L-threonylcarbamoyladenylate. Asp-290 contacts Fe cation. Positions 340–547 (EISPEAFLRA…EEIKKRARYA (208 aa)) constitute a Protein kinase domain. ATP-binding positions include 355–363 (LDNGAEAVI) and Lys-377. The active-site Proton acceptor; for kinase activity is the Asp-464.

The protein in the N-terminal section; belongs to the KAE1 / TsaD family. It in the C-terminal section; belongs to the protein kinase superfamily. Tyr protein kinase family. BUD32 subfamily. Component of the KEOPS complex that consists of Kae1, Bud32, Cgi121 and Pcc1; the whole complex dimerizes. It depends on Fe(2+) as a cofactor.

The protein resides in the cytoplasm. The catalysed reaction is L-seryl-[protein] + ATP = O-phospho-L-seryl-[protein] + ADP + H(+). The enzyme catalyses L-threonyl-[protein] + ATP = O-phospho-L-threonyl-[protein] + ADP + H(+). It carries out the reaction L-threonylcarbamoyladenylate + adenosine(37) in tRNA = N(6)-L-threonylcarbamoyladenosine(37) in tRNA + AMP + H(+). Its function is as follows. Required for the formation of a threonylcarbamoyl group on adenosine at position 37 (t(6)A37) in tRNAs that read codons beginning with adenine. Is a component of the KEOPS complex that is probably involved in the transfer of the threonylcarbamoyl moiety of threonylcarbamoyl-AMP (TC-AMP) to the N6 group of A37. The Kae1 domain likely plays a direct catalytic role in this reaction. The Bud32 domain probably displays kinase activity that regulates Kae1 function. The protein is Probable bifunctional tRNA threonylcarbamoyladenosine biosynthesis protein of Methanosarcina acetivorans (strain ATCC 35395 / DSM 2834 / JCM 12185 / C2A).